We begin with the raw amino-acid sequence, 288 residues long: Putative aryl-alcohol dehydrogenase AAD10 (288 aa).

It belongs to the aldo/keto reductase family. Aldo/keto reductase 2 subfamily.

This Saccharomyces cerevisiae (strain ATCC 204508 / S288c) (Baker's yeast) protein is Putative aryl-alcohol dehydrogenase AAD10 (AAD10).